Here is a 291-residue protein sequence, read N- to C-terminus: tRNA-cytidine(32) 2-sulfurtransferase (291 aa).

The short motif at 36–41 (SGGKDS) is the PP-loop motif element. 3 residues coordinate [4Fe-4S] cluster: cysteine 111, cysteine 114, and cysteine 202. A disordered region spans residues 259 to 291 (DPWLDAEDEEAEDCGEPSAGDGVVSLGGARGGR). Positions 262–273 (LDAEDEEAEDCG) are enriched in acidic residues.

It belongs to the TtcA family. Homodimer. Requires Mg(2+) as cofactor. The cofactor is [4Fe-4S] cluster.

Its subcellular location is the cytoplasm. It catalyses the reaction cytidine(32) in tRNA + S-sulfanyl-L-cysteinyl-[cysteine desulfurase] + AH2 + ATP = 2-thiocytidine(32) in tRNA + L-cysteinyl-[cysteine desulfurase] + A + AMP + diphosphate + H(+). The protein operates within tRNA modification. Functionally, catalyzes the ATP-dependent 2-thiolation of cytidine in position 32 of tRNA, to form 2-thiocytidine (s(2)C32). The sulfur atoms are provided by the cysteine/cysteine desulfurase (IscS) system. The sequence is that of tRNA-cytidine(32) 2-sulfurtransferase from Anaeromyxobacter sp. (strain K).